Here is a 625-residue protein sequence, read N- to C-terminus: PTS system beta-glucoside-specific EIIBCA component (625 aa).

One can recognise a PTS EIIB type-1 domain in the interval 1–84 (MTELARKIVA…NSVAGLDEKA (84 aa)). Residues 1 to 99 (MTELARKIVA…NDDKGNLLNR (99 aa)) are Periplasmic-facing. Cys24 serves as the catalytic Phosphocysteine intermediate; for EIIB activity. A helical transmembrane segment spans residues 100–120 (FVYVISGIFTPLIGLMAATGI). One can recognise a PTS EIIC type-1 domain in the interval 102 to 465 (YVISGIFTPL…RQPAQGAPQE (364 aa)). At 121-140 (LKGMLALALTFQWTTEQSGT) the chain is on the cytoplasmic side. Residues 141–161 (YLILFSASDALFWFFPIILGY) form a helical membrane-spanning segment. At 162–166 (TAGKR) the chain is on the periplasmic side. The helical transmembrane segment at 167–187 (FGGNPFTAMVIGGALVHPLIL) threads the bilayer. The Cytoplasmic segment spans residues 188 to 202 (TAFENGQKADALGLD). A helical transmembrane segment spans residues 203 to 223 (FLGIPVTLLNYSSSVIPIIFS). Topologically, residues 224–244 (AWLCSILERRLNAWLPSAIKN) are periplasmic. The helical transmembrane segment at 245–265 (FFTPLLCLMVITPVTFLLVGP) threads the bilayer. Topologically, residues 266–284 (LSTWISELIAAGYLWLYQA) are cytoplasmic. The chain crosses the membrane as a helical span at residues 285–305 (VPAFAGAVMGGFWQIFVMFGL). At 306–324 (HWGLVPLCINNFTVLGYDT) the chain is on the periplasmic side. A helical membrane pass occupies residues 325 to 345 (MIPLLMPAIMAQVGAALGVFL). The Cytoplasmic segment spans residues 346-353 (CERDAQKK). A helical membrane pass occupies residues 354 to 374 (VVAGSAALTSLFGITEPAVYG). Residues 375 to 380 (VNLPRK) are Periplasmic-facing. A helical membrane pass occupies residues 381–401 (YPFVIACISGALGATIIGYAQ). Over 402–403 (TK) the chain is Cytoplasmic. A helical membrane pass occupies residues 404 to 424 (VYSFGLPSIFTFMQTIPSTGI). At 425-431 (DFTVWAS) the chain is on the periplasmic side. A helical transmembrane segment spans residues 432–452 (VIGGVIAIGCAFVGTVMLHFI). Residues 453-625 (TAKRQPAQGA…AGEPLLSIIR (173 aa)) lie on the Cytoplasmic side of the membrane. In terms of domain architecture, PTS EIIA type-1 spans 495–599 (DTTFASGLLG…DLTTPVLISN (105 aa)). Catalysis depends on His547, which acts as the Tele-phosphohistidine intermediate; for EIIA activity.

It localises to the cell inner membrane. Functionally, the phosphoenolpyruvate-dependent sugar phosphotransferase system (sugar PTS), a major carbohydrate active -transport system, catalyzes the phosphorylation of incoming sugar substrates concomitantly with their translocation across the cell membrane. This system is involved in beta-glucoside transport. Its function is as follows. Acts both as a kinase and as a phosphatase on BglG. The chain is PTS system beta-glucoside-specific EIIBCA component (bglF) from Escherichia coli (strain K12).